The following is a 107-amino-acid chain: MQFSTTPTLEGQTIVEYCGVVTGEAILGANIFRDFFAGIRDIVGGRSGAYEKELRKAREIAFEELGSQARALGADAVVGIDIDYETVGQNGSMLMVSVSGTAVKTRR.

It belongs to the UPF0145 family.

The chain is UPF0145 protein YbjQ from Escherichia coli O139:H28 (strain E24377A / ETEC).